Consider the following 838-residue polypeptide: Protein translocase subunit SecA (838 aa).

Residues Q86, 104–108 (GEGKT), and D493 each bind ATP. Disordered regions lie at residues 517 to 536 (RRID…PGSS) and 789 to 838 (KVAE…CCGQ). Residues 801-819 (TDGDSKAKRQPVRKKETVG) show a composition bias toward basic and acidic residues. Zn(2+)-binding residues include C824, C826, C835, and C836.

The protein belongs to the SecA family. Monomer and homodimer. Part of the essential Sec protein translocation apparatus which comprises SecA, SecYEG and auxiliary proteins SecDF. Other proteins may also be involved. The cofactor is Zn(2+).

The protein localises to the cell membrane. Its subcellular location is the cytoplasm. The catalysed reaction is ATP + H2O + cellular proteinSide 1 = ADP + phosphate + cellular proteinSide 2.. Part of the Sec protein translocase complex. Interacts with the SecYEG preprotein conducting channel. Has a central role in coupling the hydrolysis of ATP to the transfer of proteins into and across the cell membrane, serving as an ATP-driven molecular motor driving the stepwise translocation of polypeptide chains across the membrane. The protein is Protein translocase subunit SecA of Halalkalibacterium halodurans (strain ATCC BAA-125 / DSM 18197 / FERM 7344 / JCM 9153 / C-125) (Bacillus halodurans).